Here is a 421-residue protein sequence, read N- to C-terminus: CinA-like protein (421 aa).

Belongs to the CinA family.

The sequence is that of CinA-like protein from Synechococcus elongatus (strain ATCC 33912 / PCC 7942 / FACHB-805) (Anacystis nidulans R2).